The following is a 116-amino-acid chain: Putative UPF0320 protein YJR162C (116 aa).

The protein belongs to the UPF0320 family.

The protein is Putative UPF0320 protein YJR162C of Saccharomyces cerevisiae (strain ATCC 204508 / S288c) (Baker's yeast).